Consider the following 179-residue polypeptide: MAKLHDKYQETVVAELTKKFGYTSVMQVPRIEKITLNMGVGEAVADKKVMEHAVRDMTAIAGQKPVVTVARKSVAGFKIREGYPIGCKVTLRGERMWEFLERLVDIAIPRIRDFRGLSAKAFDGRGNYAMGVREQIIFPEIDYDKIDKIRGMDIVITTSANTDEEGRALLDAFNFPFKK.

It belongs to the universal ribosomal protein uL5 family. Part of the 50S ribosomal subunit; part of the 5S rRNA/L5/L18/L25 subcomplex. Contacts the 5S rRNA and the P site tRNA. Forms a bridge to the 30S subunit in the 70S ribosome.

Functionally, this is one of the proteins that bind and probably mediate the attachment of the 5S RNA into the large ribosomal subunit, where it forms part of the central protuberance. In the 70S ribosome it contacts protein S13 of the 30S subunit (bridge B1b), connecting the 2 subunits; this bridge is implicated in subunit movement. Contacts the P site tRNA; the 5S rRNA and some of its associated proteins might help stabilize positioning of ribosome-bound tRNAs. The sequence is that of Large ribosomal subunit protein uL5 from Shewanella sp. (strain MR-4).